A 692-amino-acid polypeptide reads, in one-letter code: Proprotein convertase subtilisin/kexin type 9 (692 aa).

An N-terminal signal peptide occupies residues 1–30 (MGTVSSRRSWWPLPLLLLLLLLLGPAGARA). A propeptide spanning residues 31–152 (QEDEDGDYEE…IEEDSSVFAQ (122 aa)) is cleaved from the precursor. The residue at position 38 (Tyr-38) is a Sulfotyrosine. The residue at position 47 (Ser-47) is a Phosphoserine. An Inhibitor I9 domain is found at 77 to 149 (TYVVVLKEET…VDYIEEDSSV (73 aa)). In terms of domain architecture, Peptidase S8 spans 155–461 (PWNLERITPP…GWQLFCRTVW (307 aa)). Residues Asp-186 and His-226 each act as charge relay system in the active site. Intrachain disulfides connect Cys-223-Cys-255 and Cys-323-Cys-358. Ser-386 functions as the Charge relay system in the catalytic mechanism. The C-terminal domain stretch occupies residues 450–692 (GAGWQLFCRT…HLAQASQELQ (243 aa)). Intrachain disulfides connect Cys-457-Cys-527, Cys-477-Cys-526, and Cys-486-Cys-509. An N-linked (GlcNAc...) asparagine glycan is attached at Asn-533. Cystine bridges form between Cys-534–Cys-601, Cys-552–Cys-600, Cys-562–Cys-588, Cys-608–Cys-679, Cys-626–Cys-678, and Cys-635–Cys-654. A Phosphoserine modification is found at Ser-688.

This sequence belongs to the peptidase S8 family. In terms of assembly, monomer. Can self-associate to form dimers and higher multimers which may have increased LDLR degrading activity. The precursor protein but not the mature protein may form multimers. Interacts with APOB, VLDLR, LRP8/APOER2 and BACE1. The full-length immature form (pro-PCSK9) interacts with SCNN1A, SCNN1B and SCNN1G. The pro-PCSK9 form (via C-terminal domain) interacts with LDLR. Interacts (via the C-terminal domain) with ANXA2 (via repeat Annexin 1); the interaction inhibits the degradation of LDLR. It depends on Ca(2+) as a cofactor. In terms of processing, cleavage by furin and PCSK5 generates a truncated inactive protein that is unable to induce LDLR degradation. Undergoes autocatalytic cleavage in the endoplasmic reticulum to release the propeptide from the N-terminus and the cleavage of the propeptide is strictly required for its maturation and activation. The cleaved propeptide however remains associated with the catalytic domain through non-covalent interactions, preventing potential substrates from accessing its active site. As a result, it is secreted from cells as a propeptide-containing, enzymatically inactive protein. Post-translationally, phosphorylation protects the propeptide against proteolysis.

It localises to the cytoplasm. Its subcellular location is the secreted. The protein resides in the endosome. It is found in the lysosome. The protein localises to the cell surface. It localises to the endoplasmic reticulum. Its subcellular location is the golgi apparatus. Its activity is regulated as follows. Its proteolytic activity is autoinhibited by the non-covalent binding of the propeptide to the catalytic domain. Inhibited by EGTA. Crucial player in the regulation of plasma cholesterol homeostasis. Binds to low-density lipid receptor family members: low density lipoprotein receptor (LDLR), very low density lipoprotein receptor (VLDLR), apolipoprotein E receptor (LRP1/APOER) and apolipoprotein receptor 2 (LRP8/APOER2), and promotes their degradation in intracellular acidic compartments. Acts via a non-proteolytic mechanism to enhance the degradation of the hepatic LDLR through a clathrin LDLRAP1/ARH-mediated pathway. May prevent the recycling of LDLR from endosomes to the cell surface or direct it to lysosomes for degradation. Can induce ubiquitination of LDLR leading to its subsequent degradation. Inhibits intracellular degradation of APOB via the autophagosome/lysosome pathway in a LDLR-independent manner. Involved in the disposal of non-acetylated intermediates of BACE1 in the early secretory pathway. Inhibits epithelial Na(+) channel (ENaC)-mediated Na(+) absorption by reducing ENaC surface expression primarily by increasing its proteasomal degradation. Regulates neuronal apoptosis via modulation of LRP8/APOER2 levels and related anti-apoptotic signaling pathways. The chain is Proprotein convertase subtilisin/kexin type 9 (PCSK9) from Pan paniscus (Pygmy chimpanzee).